The primary structure comprises 224 residues: UPF0758 protein mma_2551 (224 aa).

The MPN domain maps to 102–224; it reads SLNSPQAVKK…VYSFAEHGHL (123 aa). The Zn(2+) site is built by histidine 173, histidine 175, and aspartate 186. The JAMM motif motif lies at 173 to 186; the sequence is HNHPSGSSEPSAAD.

This sequence belongs to the UPF0758 family.

This Janthinobacterium sp. (strain Marseille) (Minibacterium massiliensis) protein is UPF0758 protein mma_2551.